The sequence spans 74 residues: ATP synthase subunit c (74 aa).

Transmembrane regions (helical) follow at residues 5-25 and 49-69; these read LAHIGAGLAAIGSGAAAIGVG and LFIGIAFAEALGIFAFLVALL.

It belongs to the ATPase C chain family. F-type ATPases have 2 components, F(1) - the catalytic core - and F(0) - the membrane proton channel. F(1) has five subunits: alpha(3), beta(3), gamma(1), delta(1), epsilon(1). F(0) has four main subunits: a(1), b(1), b'(1) and c(10-14). The alpha and beta chains form an alternating ring which encloses part of the gamma chain. F(1) is attached to F(0) by a central stalk formed by the gamma and epsilon chains, while a peripheral stalk is formed by the delta, b and b' chains.

The protein localises to the cell inner membrane. F(1)F(0) ATP synthase produces ATP from ADP in the presence of a proton or sodium gradient. F-type ATPases consist of two structural domains, F(1) containing the extramembraneous catalytic core and F(0) containing the membrane proton channel, linked together by a central stalk and a peripheral stalk. During catalysis, ATP synthesis in the catalytic domain of F(1) is coupled via a rotary mechanism of the central stalk subunits to proton translocation. Its function is as follows. Key component of the F(0) channel; it plays a direct role in translocation across the membrane. A homomeric c-ring of between 10-14 subunits forms the central stalk rotor element with the F(1) delta and epsilon subunits. The sequence is that of ATP synthase subunit c from Roseobacter denitrificans (strain ATCC 33942 / OCh 114) (Erythrobacter sp. (strain OCh 114)).